We begin with the raw amino-acid sequence, 194 residues long: MEKLIFATNNPHKLNEIRHILEGKVEIVGLDEIGCREDIPETADTLQGNALLKAEFVHKRYGLPCFADDTGLEVEALDRAPGVHSARYAGEPTNADANVRKLLEALSSVPHPRKACFRTVIALIDDHGKHFFEGKIEGTIASECRGSGGFGYDPVFIPEGHTLSFAEMGEETKNQISHRALAVAQLRDFLLCAK.

Substrate is bound at residue 8-13; it reads TNNPHK. Asp69 functions as the Proton acceptor in the catalytic mechanism. Asp69 contributes to the Mg(2+) binding site. Substrate-binding positions include Thr70, 150–153, Lys173, and 178–179; these read FGYD and HR.

This sequence belongs to the HAM1 NTPase family. In terms of assembly, homodimer. The cofactor is Mg(2+).

The enzyme catalyses XTP + H2O = XMP + diphosphate + H(+). The catalysed reaction is dITP + H2O = dIMP + diphosphate + H(+). It catalyses the reaction ITP + H2O = IMP + diphosphate + H(+). In terms of biological role, pyrophosphatase that catalyzes the hydrolysis of nucleoside triphosphates to their monophosphate derivatives, with a high preference for the non-canonical purine nucleotides XTP (xanthosine triphosphate), dITP (deoxyinosine triphosphate) and ITP. Seems to function as a house-cleaning enzyme that removes non-canonical purine nucleotides from the nucleotide pool, thus preventing their incorporation into DNA/RNA and avoiding chromosomal lesions. This chain is dITP/XTP pyrophosphatase, found in Porphyromonas gingivalis (strain ATCC BAA-308 / W83).